A 40-amino-acid polypeptide reads, in one-letter code: MMSEGGRIPLWIVATVAGMGVIVIVGLFFYGAYAGLGSSL.

Met2 carries the N-acetylmethionine modification. Residues 2–11 (MSEGGRIPLW) are Cytoplasmic-facing. A helical membrane pass occupies residues 12–26 (IVATVAGMGVIVIVG). At 27 to 40 (LFFYGAYAGLGSSL) the chain is on the lumenal side.

It belongs to the PsbJ family. As to quaternary structure, PSII is composed of 1 copy each of membrane proteins PsbA, PsbB, PsbC, PsbD, PsbE, PsbF, PsbH, PsbI, PsbJ, PsbK, PsbL, PsbM, PsbT, PsbX, PsbY, PsbZ, Psb30/Ycf12, peripheral proteins PsbO, CyanoQ (PsbQ), PsbU, PsbV and a large number of cofactors. It forms dimeric complexes. PSII binds multiple chlorophylls, carotenoids and specific lipids. serves as cofactor.

The protein resides in the cellular thylakoid membrane. Its function is as follows. One of the components of the core complex of photosystem II (PSII). PSII is a light-driven water:plastoquinone oxidoreductase that uses light energy to abstract electrons from H(2)O, generating O(2) and a proton gradient subsequently used for ATP formation. It consists of a core antenna complex that captures photons, and an electron transfer chain that converts photonic excitation into a charge separation. May play a regulatory role in PSII biogenesis. The chain is Photosystem II reaction center protein J from Thermosynechococcus vestitus (strain NIES-2133 / IAM M-273 / BP-1).